A 154-amino-acid chain; its full sequence is Lipoprotein signal peptidase (154 aa).

Helical transmembrane passes span 7 to 27, 58 to 78, and 88 to 108; these read VLYLVISLLVVIADQGLKNYI, IFSGQMILFYLISIAAIAVVV, and NWLFDTGLALVLGGIIGNFID. Catalysis depends on residues D117 and D133. A helical transmembrane segment spans residues 128–148; the sequence is IFNIADSAITVGIVLVFIYLI.

It belongs to the peptidase A8 family.

The protein localises to the cell membrane. The catalysed reaction is Release of signal peptides from bacterial membrane prolipoproteins. Hydrolyzes -Xaa-Yaa-Zaa-|-(S,diacylglyceryl)Cys-, in which Xaa is hydrophobic (preferably Leu), and Yaa (Ala or Ser) and Zaa (Gly or Ala) have small, neutral side chains.. It participates in protein modification; lipoprotein biosynthesis (signal peptide cleavage). This protein specifically catalyzes the removal of signal peptides from prolipoproteins. This Lactobacillus gasseri (strain ATCC 33323 / DSM 20243 / BCRC 14619 / CIP 102991 / JCM 1131 / KCTC 3163 / NCIMB 11718 / NCTC 13722 / AM63) protein is Lipoprotein signal peptidase.